Consider the following 204-residue polypeptide: 34 kDa membrane antigen (204 aa).

A signal peptide spans 1–19; it reads MKRVSLLGSAAIFALVFSA. A lipid anchor (N-palmitoyl cysteine) is attached at C20. A lipid anchor (S-diacylglycerol cysteine) is attached at C20.

The protein belongs to the UPF0423 family.

Its subcellular location is the cell membrane. This antigen is a pathogen-specific membrane immunogen. The sequence is that of 34 kDa membrane antigen (tpd) from Treponema pallidum (strain Nichols).